Here is a 300-residue protein sequence, read N- to C-terminus: Protoheme IX farnesyltransferase (300 aa).

9 helical membrane-spanning segments follow: residues 24-44 (VTQL…PGMV), 48-68 (VLLG…AINC), 94-114 (LQIL…LYTF), 118-138 (LTMW…TLLL), 146-166 (IVIG…AVTG), 172-192 (AWIL…VLAL), 217-237 (LHIL…FISG), 239-259 (SGAV…AYAW), and 278-298 (IVYL…RPVI).

It belongs to the UbiA prenyltransferase family. Protoheme IX farnesyltransferase subfamily.

Its subcellular location is the cell inner membrane. It catalyses the reaction heme b + (2E,6E)-farnesyl diphosphate + H2O = Fe(II)-heme o + diphosphate. It functions in the pathway porphyrin-containing compound metabolism; heme O biosynthesis; heme O from protoheme: step 1/1. Converts heme B (protoheme IX) to heme O by substitution of the vinyl group on carbon 2 of heme B porphyrin ring with a hydroxyethyl farnesyl side group. The chain is Protoheme IX farnesyltransferase from Burkholderia pseudomallei (strain 1106a).